Consider the following 360-residue polypeptide: Mannose-1-phosphate guanylyltransferase catalytic subunit beta (360 aa).

Positions 2-222 (KALILVGGYG…QGFWMDIGQP (221 aa)) are substrate-binding domain. Aspartate 110 is a GDP-alpha-D-mannose binding site. Position 110 (aspartate 110) interacts with Mg(2+). Lysine 162 is a catalytic residue. Residue aspartate 218 participates in GDP-alpha-D-mannose binding. Residue aspartate 218 participates in Mg(2+) binding. A hexapeptide repeat domain region spans residues 245–360 (CSGPGIVGNV…ESVPEPRIIM (116 aa)).

It belongs to the transferase hexapeptide repeat family. Component of the GMPPA-GMPPB mannose-1-phosphate guanylyltransferase complex composed of 4 GMPPA subunits and 8 GMPPB subunits; the complex is organized into three layers, a central layer made up of 2 GMPPA dimers sandwiched between two layers each made up of 2 GMPPB dimers. GMPPB catalytic activity is reduced when part of the complex and binding of GDP-alpha-D-Mannose by GMPPA induces allosteric feedback inhibition of GMPPB. Mg(2+) serves as cofactor. As to expression, ubiquitously expressed, including in brain and skeletal muscle. Weakly expressed with highest expression in skeletal muscle, brain and gonads.

Its subcellular location is the cytoplasm. It catalyses the reaction alpha-D-mannose 1-phosphate + GTP + H(+) = GDP-alpha-D-mannose + diphosphate. Its pathway is nucleotide-sugar biosynthesis; GDP-alpha-D-mannose biosynthesis; GDP-alpha-D-mannose from alpha-D-mannose 1-phosphate (GTP route): step 1/1. Enzyme activity is reduced by incorporation into the GMPPA-GMPPB mannose-1-phosphate guanylyltransferase complex. Allosterically inhibited, when part of the GMPPA-GMPPB complex, by GDP-alpha-D-mannose binding to GMPPA. Its function is as follows. Catalytic subunit of the GMPPA-GMPPB mannose-1-phosphate guanylyltransferase complex. Catalyzes the formation of GDP-mannose, an essential precursor of glycan moieties of glycoproteins and glycolipids. Can catalyze the reverse reaction in vitro. Together with GMPPA regulates GDP-alpha-D-mannose levels. The sequence is that of Mannose-1-phosphate guanylyltransferase catalytic subunit beta from Homo sapiens (Human).